The sequence spans 382 residues: Secreted RxLR effector protein 118 (382 aa).

A signal peptide spans 1 to 21 (MRGAYYVTIALLVVASSQISA). The short motif at 48–65 (RSLRGSRDVSNDVAIEER) is the RxLR-dEER element. The disordered stretch occupies residues 308 to 382 (MNKASTSKGK…AVTSLSSISN (75 aa)). Residues 310 to 323 (KASTSKGKSSVFTR) show a composition bias toward polar residues.

Belongs to the RxLR effector family.

It localises to the secreted. The protein localises to the host nucleus. Its function is as follows. Secreted effector that completely suppresses the host cell death induced by cell death-inducing proteins. This Plasmopara viticola (Downy mildew of grapevine) protein is Secreted RxLR effector protein 118.